The primary structure comprises 389 residues: 8-amino-7-oxononanoate synthase (389 aa).

A substrate-binding site is contributed by Arg-19. Residue 106–107 (GY) coordinates pyridoxal 5'-phosphate. Position 131 (His-131) interacts with substrate. 3 residues coordinate pyridoxal 5'-phosphate: Ser-176, His-204, and Thr-233. Lys-236 bears the N6-(pyridoxal phosphate)lysine mark. A substrate-binding site is contributed by Thr-350.

It belongs to the class-II pyridoxal-phosphate-dependent aminotransferase family. BioF subfamily. In terms of assembly, homodimer. It depends on pyridoxal 5'-phosphate as a cofactor.

The catalysed reaction is 6-carboxyhexanoyl-[ACP] + L-alanine + H(+) = (8S)-8-amino-7-oxononanoate + holo-[ACP] + CO2. Its pathway is cofactor biosynthesis; biotin biosynthesis. Its function is as follows. Catalyzes the decarboxylative condensation of pimeloyl-[acyl-carrier protein] and L-alanine to produce 8-amino-7-oxononanoate (AON), [acyl-carrier protein], and carbon dioxide. The protein is 8-amino-7-oxononanoate synthase of Ectopseudomonas mendocina (strain ymp) (Pseudomonas mendocina).